The sequence spans 468 residues: Glutamate--tRNA ligase (468 aa).

A 'HIGH' region motif is present at residues 12–22; it reads PSPTGFIHLGN. The 'KMSKS' region motif lies at 244–248; sequence KMSKR. Lysine 247 is a binding site for ATP.

This sequence belongs to the class-I aminoacyl-tRNA synthetase family. Glutamate--tRNA ligase type 1 subfamily. Monomer.

It is found in the cytoplasm. It carries out the reaction tRNA(Glu) + L-glutamate + ATP = L-glutamyl-tRNA(Glu) + AMP + diphosphate. Catalyzes the attachment of glutamate to tRNA(Glu) in a two-step reaction: glutamate is first activated by ATP to form Glu-AMP and then transferred to the acceptor end of tRNA(Glu). The sequence is that of Glutamate--tRNA ligase from Polynucleobacter necessarius subsp. necessarius (strain STIR1).